Consider the following 80-residue polypeptide: MLRRNPTAIQITAEDVLAYDEEKLRQTLDSESTTEEALQKNEESTRLSPEKKKIIRERRIGITQIFDSSMHPSQGGAAQS.

Met-1 is modified (N-acetylmethionine). A disordered region spans residues 26–54 (QTLDSESTTEEALQKNEESTRLSPEKKKI). Residues 37 to 54 (ALQKNEESTRLSPEKKKI) are compositionally biased toward basic and acidic residues.

As to quaternary structure, the APC/C is composed of at least 13 subunits: apc1, apc2, nuc2, apc4, apc5, cut9, apc8, apc10, apc11, hcn1, apc13, apc14 and apc15. Interacts directly (via N-terminus) with cut9.

In terms of biological role, component of the anaphase promoting complex/cyclosome (APC/C), a cell cycle-regulated E3 ubiquitin-protein ligase complex that controls progression through mitosis and the G1 phase of the cell cycle. The APC/C is thought to confer substrate specificity and, in the presence of ubiquitin-conjugating E2 enzymes, it catalyzes the formation of protein-ubiquitin conjugates that are subsequently degraded by the 26S proteasome. Has a role in assembling cut9 in the 20S APC/cyclosome. The polypeptide is Anaphase-promoting complex subunit hcn1 (hcn1) (Schizosaccharomyces pombe (strain 972 / ATCC 24843) (Fission yeast)).